Consider the following 517-residue polypeptide: Legumin A (517 aa).

The first 21 residues, 1 to 21 (MAKLLALSLSFCFLLLGGCFA), serve as a signal peptide directing secretion. 2 cysteine pairs are disulfide-bonded: Cys-31–Cys-64 and Cys-107–Cys-339. The region spanning 36 to 232 (LDALEPDNRI…AFNVNRHIVD (197 aa)) is the Cupin type-1 1 domain. Positions 249–335 (VKGGLSIISP…SRRQGDNGLE (87 aa)) are disordered. The Cupin type-1 2 domain maps to 345 to 494 (LNIGPSSSPD…TFNLQRNEAR (150 aa)).

This sequence belongs to the 11S seed storage protein (globulins) family. As to quaternary structure, hexamer; each subunit is composed of an acidic and a basic chain derived from a single precursor and linked by a disulfide bond.

In terms of biological role, this protein found in the seeds of many leguminous and non-leguminous plants is the source of sulfur-containing amino acids in seed meals. This is Legumin A (LEGA) from Pisum sativum (Garden pea).